The chain runs to 500 residues: UDP-N-acetylmuramoyl-L-alanyl-D-glutamate--2,6-diaminopimelate ligase (500 aa).

S38 is a binding site for UDP-N-acetyl-alpha-D-muramoyl-L-alanyl-D-glutamate. 118-124 lines the ATP pocket; sequence GTNGKTS. Residues 160–161, S187, and R195 contribute to the UDP-N-acetyl-alpha-D-muramoyl-L-alanyl-D-glutamate site; that span reads TT. K227 bears the N6-carboxylysine mark. Residues R395, 419–422, G471, and E475 each bind meso-2,6-diaminopimelate; that span reads DNPR. The Meso-diaminopimelate recognition motif motif lies at 419-422; it reads DNPR.

This sequence belongs to the MurCDEF family. MurE subfamily. It depends on Mg(2+) as a cofactor. Post-translationally, carboxylation is probably crucial for Mg(2+) binding and, consequently, for the gamma-phosphate positioning of ATP.

It localises to the cytoplasm. The enzyme catalyses UDP-N-acetyl-alpha-D-muramoyl-L-alanyl-D-glutamate + meso-2,6-diaminopimelate + ATP = UDP-N-acetyl-alpha-D-muramoyl-L-alanyl-gamma-D-glutamyl-meso-2,6-diaminopimelate + ADP + phosphate + H(+). It functions in the pathway cell wall biogenesis; peptidoglycan biosynthesis. Its function is as follows. Catalyzes the addition of meso-diaminopimelic acid to the nucleotide precursor UDP-N-acetylmuramoyl-L-alanyl-D-glutamate (UMAG) in the biosynthesis of bacterial cell-wall peptidoglycan. The protein is UDP-N-acetylmuramoyl-L-alanyl-D-glutamate--2,6-diaminopimelate ligase of Leptospira borgpetersenii serovar Hardjo-bovis (strain L550).